The sequence spans 393 residues: MGYYSLTEVTAVQYAKEHGYFEKKANVVCHEIGDGNLNYVFKLDDGEKSIIIKQALPYAKVVGESWPLSIKRATIESKALQIFAKYVPEYVPVVYSHDEELAVTVIEDLSRLSITRTGLIDGEEYPLLSQHIGRFLAHVLFYTSDLGLESEEKRVLEGTFVNPDLCKITEDLVFTDPFGHYDTNDYEPELQLTIDELWSDKTLKLKVAQYKYKFLTRKEALIHGDLHTGSIFSSPSETKVIDPEFATYGPFGFDIGQFIANLLLNALSREEEQRGVLFFHIEKTWSYFVETFTKLWIGEGVEAYTKEKQWLPIILQNIFTDAVGFAGCELIRRTIGLAHVADLDEITNKETRIQAKKQALSLGKELIKYESKNADIQLFRTLFQQTVSGGIKA.

ATP is bound by residues Asn-38, Lys-53, and 107–109 (EDL). Position 225 (Asp-225) interacts with substrate. 242 to 244 (DPE) is an ATP binding site. Arg-332 serves as a coordination point for substrate.

This sequence belongs to the methylthioribose kinase family. As to quaternary structure, homodimer.

The catalysed reaction is 5-(methylsulfanyl)-D-ribose + ATP = 5-(methylsulfanyl)-alpha-D-ribose 1-phosphate + ADP + H(+). The protein operates within amino-acid biosynthesis; L-methionine biosynthesis via salvage pathway; S-methyl-5-thio-alpha-D-ribose 1-phosphate from S-methyl-5'-thioadenosine (hydrolase route): step 2/2. In terms of biological role, catalyzes the phosphorylation of methylthioribose into methylthioribose-1-phosphate. This chain is Methylthioribose kinase, found in Bacillus cereus (strain ZK / E33L).